A 79-amino-acid polypeptide reads, in one-letter code: Small ribosomal subunit protein bS18 (79 aa).

Belongs to the bacterial ribosomal protein bS18 family. In terms of assembly, part of the 30S ribosomal subunit. Forms a tight heterodimer with protein bS6.

Its function is as follows. Binds as a heterodimer with protein bS6 to the central domain of the 16S rRNA, where it helps stabilize the platform of the 30S subunit. The chain is Small ribosomal subunit protein bS18 from Ureaplasma urealyticum serovar 10 (strain ATCC 33699 / Western).